The primary structure comprises 77 residues: U8-lycotoxin-Ls1f (77 aa).

The first 20 residues, 1 to 20 (MKLIIFTGLVLFAIVSLIEV), serve as a signal peptide directing secretion. Residues 21–26 (QADNER) constitute a propeptide that is removed on maturation.

Belongs to the neurotoxin 19 (CSTX) family. 08 (U8-Lctx) subfamily. Post-translationally, contains 4 disulfide bonds. As to expression, expressed by the venom gland.

Its subcellular location is the secreted. The chain is U8-lycotoxin-Ls1f from Lycosa singoriensis (Wolf spider).